The primary structure comprises 548 residues: MDSQRNLLVIALLFVSFMIWQAWEQDKNPQPQQQQTTQTTTTAAGSAADQGVPASGQGKQITVKTDVLELTINTRGGDIEQALLLTYPKELKSNEPFQLLETTPEFLYQAQSGLTGRDGPDNPANGARPLYNVDKDTFVMADGQNELAIPMTYTDAAGNTFTKTFTLKRGEYAVSVGYNVQNTSAKPLEVSTFGQLKQSINLPSHRDTGSSNFALHTFRGAAYSTPDTKYEKYKFDTIADNENLNVSAKGGWVAMLQQYFATAWVPNNDGVNNFYTANLGNGIAAIGYKSQPVLVQPGQTGTLGSTLWVGPEIQNKMAAVAPHLDLTVDYGWLWFISQPLFKLLKWIHSFLGNWGFSIIVITFIVRGIMYPLTKAQYTSMAKMRMLQPKIAAMRERLGDDKQRQSQEMMALYKAEKVNPLGGCFPLLIQMPIFLALYYMLMGSVELRHAPFALWIHDLSAQDPYYILPILMGITMFFIQKMSPTTVTDPMQQKIMTFMPVIFTVFFLWFPSGLVLYYIVSNLVTILQQQLIYRGLEKRGLHSREKKKS.

The chain crosses the membrane as a helical span at residues 6-26; that stretch reads NLLVIALLFVSFMIWQAWEQD. The tract at residues 28-58 is disordered; the sequence is NPQPQQQQTTQTTTTAAGSAADQGVPASGQG. Residues 29-42 are compositionally biased toward low complexity; the sequence is PQPQQQQTTQTTTT. The next 4 membrane-spanning stretches (helical) occupy residues 350-370, 420-440, 458-478, and 499-519; these read FLGN…GIMY, LGGC…YYML, LSAQ…MFFI, and PVIF…YYIV.

The protein belongs to the OXA1/ALB3/YidC family. Type 1 subfamily. Interacts with the Sec translocase complex via SecD. Specifically interacts with transmembrane segments of nascent integral membrane proteins during membrane integration.

Its subcellular location is the cell inner membrane. Its function is as follows. Required for the insertion and/or proper folding and/or complex formation of integral membrane proteins into the membrane. Involved in integration of membrane proteins that insert both dependently and independently of the Sec translocase complex, as well as at least some lipoproteins. Aids folding of multispanning membrane proteins. In Enterobacter sp. (strain 638), this protein is Membrane protein insertase YidC.